Here is a 103-residue protein sequence, read N- to C-terminus: Large ribosomal subunit protein uL24 (103 aa).

It belongs to the universal ribosomal protein uL24 family. In terms of assembly, part of the 50S ribosomal subunit.

Functionally, one of two assembly initiator proteins, it binds directly to the 5'-end of the 23S rRNA, where it nucleates assembly of the 50S subunit. Its function is as follows. One of the proteins that surrounds the polypeptide exit tunnel on the outside of the subunit. This is Large ribosomal subunit protein uL24 from Anoxybacillus flavithermus (strain DSM 21510 / WK1).